The sequence spans 423 residues: Glutamate-1-semialdehyde 2,1-aminomutase (423 aa).

Lys266 is subject to N6-(pyridoxal phosphate)lysine.

Belongs to the class-III pyridoxal-phosphate-dependent aminotransferase family. HemL subfamily. In terms of assembly, homodimer. It depends on pyridoxal 5'-phosphate as a cofactor.

It localises to the cytoplasm. The enzyme catalyses (S)-4-amino-5-oxopentanoate = 5-aminolevulinate. The protein operates within porphyrin-containing compound metabolism; protoporphyrin-IX biosynthesis; 5-aminolevulinate from L-glutamyl-tRNA(Glu): step 2/2. The sequence is that of Glutamate-1-semialdehyde 2,1-aminomutase from Nitratidesulfovibrio vulgaris (strain DP4) (Desulfovibrio vulgaris).